Reading from the N-terminus, the 55-residue chain is ATP synthase protein 8 (55 aa).

A helical membrane pass occupies residues isoleucine 7–leucine 28.

It belongs to the ATPase protein 8 family. As to quaternary structure, F-type ATPases have 2 components, CF(1) - the catalytic core - and CF(0) - the membrane proton channel.

It is found in the mitochondrion membrane. Its function is as follows. Mitochondrial membrane ATP synthase (F(1)F(0) ATP synthase or Complex V) produces ATP from ADP in the presence of a proton gradient across the membrane which is generated by electron transport complexes of the respiratory chain. F-type ATPases consist of two structural domains, F(1) - containing the extramembraneous catalytic core and F(0) - containing the membrane proton channel, linked together by a central stalk and a peripheral stalk. During catalysis, ATP synthesis in the catalytic domain of F(1) is coupled via a rotary mechanism of the central stalk subunits to proton translocation. Part of the complex F(0) domain. Minor subunit located with subunit a in the membrane. The protein is ATP synthase protein 8 (MT-ATP8) of Pisaster ochraceus (Ochre sea star).